Reading from the N-terminus, the 362-residue chain is Chorismate synthase (362 aa).

Arg46 lines the NADP(+) pocket. FMN is bound by residues 121–123 (RAS), 237–238 (NA), Gly277, 292–296 (KPTPS), and Arg318.

It belongs to the chorismate synthase family. As to quaternary structure, homotetramer. Requires FMNH2 as cofactor.

It carries out the reaction 5-O-(1-carboxyvinyl)-3-phosphoshikimate = chorismate + phosphate. It participates in metabolic intermediate biosynthesis; chorismate biosynthesis; chorismate from D-erythrose 4-phosphate and phosphoenolpyruvate: step 7/7. Its function is as follows. Catalyzes the anti-1,4-elimination of the C-3 phosphate and the C-6 proR hydrogen from 5-enolpyruvylshikimate-3-phosphate (EPSP) to yield chorismate, which is the branch point compound that serves as the starting substrate for the three terminal pathways of aromatic amino acid biosynthesis. This reaction introduces a second double bond into the aromatic ring system. This chain is Chorismate synthase, found in Campylobacter lari (strain RM2100 / D67 / ATCC BAA-1060).